The following is a 176-amino-acid chain: Endoribonuclease YbeY (176 aa).

Residues His117, His121, and His127 each coordinate Zn(2+).

This sequence belongs to the endoribonuclease YbeY family. Requires Zn(2+) as cofactor.

The protein localises to the cytoplasm. Single strand-specific metallo-endoribonuclease involved in late-stage 70S ribosome quality control and in maturation of the 3' terminus of the 16S rRNA. The polypeptide is Endoribonuclease YbeY (Methylocella silvestris (strain DSM 15510 / CIP 108128 / LMG 27833 / NCIMB 13906 / BL2)).